Here is a 442-residue protein sequence, read N- to C-terminus: Radical S-adenosyl methionine domain-containing protein 1, mitochondrial (442 aa).

The N-terminal 22 residues, 1 to 22, are a transit peptide targeting the mitochondrion; that stretch reads MALPRSQARGWVKAAKMAQRRR. The tract at residues 1–37 is disordered; the sequence is MALPRSQARGWVKAAKMAQRRRPADDTGGPQSPAPGS. Residues 34 to 270 enclose the Radical SAM core domain; sequence APGSQRAALY…RAVLREAGFR (237 aa). Y43 lines the S-adenosyl-L-methionine pocket. 3 residues coordinate [4Fe-4S] cluster: C49, C53, and C56. Residues G98, 99–100, E131, Q158, R170, and D195 each bind S-adenosyl-L-methionine; that span reads GT.

It belongs to the anaerobic coproporphyrinogen-III oxidase family. HemW subfamily. Requires [4Fe-4S] cluster as cofactor.

The protein resides in the mitochondrion. In terms of biological role, may be a heme chaperone, appears to bind heme. Homologous bacterial proteins do not have oxygen-independent coproporphyrinogen-III oxidase activity. Binds 1 [4Fe-4S] cluster. The cluster is coordinated with 3 cysteines and an exchangeable S-adenosyl-L-methionine. This chain is Radical S-adenosyl methionine domain-containing protein 1, mitochondrial (RSAD1), found in Bos taurus (Bovine).